We begin with the raw amino-acid sequence, 394 residues long: Elongation factor Tu (394 aa).

The tr-type G domain maps to 10-204 (KAHVNIGTIG…SVDSYIPTPT (195 aa)). The interval 19 to 26 (GHIDHGKT) is G1. 19 to 26 (GHIDHGKT) contacts GTP. Residue T26 participates in Mg(2+) binding. The G2 stretch occupies residues 60 to 64 (GITIN). The G3 stretch occupies residues 81–84 (DCPG). GTP contacts are provided by residues 81 to 85 (DCPGH) and 136 to 139 (NKCD). The tract at residues 136-139 (NKCD) is G4. The segment at 174–176 (SAL) is G5.

The protein belongs to the TRAFAC class translation factor GTPase superfamily. Classic translation factor GTPase family. EF-Tu/EF-1A subfamily. As to quaternary structure, monomer.

The protein localises to the cytoplasm. It carries out the reaction GTP + H2O = GDP + phosphate + H(+). In terms of biological role, GTP hydrolase that promotes the GTP-dependent binding of aminoacyl-tRNA to the A-site of ribosomes during protein biosynthesis. This chain is Elongation factor Tu, found in Malacoplasma penetrans (strain HF-2) (Mycoplasma penetrans).